Reading from the N-terminus, the 392-residue chain is MDKSFILNKTSSRSLARRGQLFTAHGKVETPVFCPVGSQATVKTLTPEDLKSVNINMILSNTYHLYLRPGIPIIKEMGGLHKFMNWDGVILTDSGGYQIFSLANLRKLDEGGVSFRSHIDGSTRYITPEDAVSFQQDLGSDIAMVLDECPHSEASENEVLAAMERTHQWAKRCLAAHTLKSQHLFAIVQGGLSPELRRQSAEYLASLDFPGYALGGLSLGEPKDITFETVRHTLRFLPENKPRYLMGVGAPEDLLEGVSCGVDIFDCVLPTRVARNGAFFSRLGRLNIRNAAFATQKGPIDPDCNCYTCRNYSAAYLHHLFRCEEILAYRLATIHNIAFLSNLMQEIRTSIEKDCFEEFKADFLSRYQPTNEAIRIEQKQKWLFGRNGEPPS.

Aspartate 93 acts as the Proton acceptor in catalysis. Substrate-binding positions include 93–97 (DSGGY), aspartate 147, glutamine 189, and glycine 216. Residues 247-253 (GVGAPED) form an RNA binding region. The active-site Nucleophile is aspartate 266. The tract at residues 271–275 (TRVAR) is RNA binding; important for wobble base 34 recognition. The Zn(2+) site is built by cysteine 304, cysteine 306, cysteine 309, and histidine 335.

The protein belongs to the queuine tRNA-ribosyltransferase family. As to quaternary structure, homodimer. Within each dimer, one monomer is responsible for RNA recognition and catalysis, while the other monomer binds to the replacement base PreQ1. It depends on Zn(2+) as a cofactor.

The catalysed reaction is 7-aminomethyl-7-carbaguanine + guanosine(34) in tRNA = 7-aminomethyl-7-carbaguanosine(34) in tRNA + guanine. Its pathway is tRNA modification; tRNA-queuosine biosynthesis. Functionally, catalyzes the base-exchange of a guanine (G) residue with the queuine precursor 7-aminomethyl-7-deazaguanine (PreQ1) at position 34 (anticodon wobble position) in tRNAs with GU(N) anticodons (tRNA-Asp, -Asn, -His and -Tyr). Catalysis occurs through a double-displacement mechanism. The nucleophile active site attacks the C1' of nucleotide 34 to detach the guanine base from the RNA, forming a covalent enzyme-RNA intermediate. The proton acceptor active site deprotonates the incoming PreQ1, allowing a nucleophilic attack on the C1' of the ribose to form the product. After dissociation, two additional enzymatic reactions on the tRNA convert PreQ1 to queuine (Q), resulting in the hypermodified nucleoside queuosine (7-(((4,5-cis-dihydroxy-2-cyclopenten-1-yl)amino)methyl)-7-deazaguanosine). This chain is Queuine tRNA-ribosyltransferase, found in Dehalococcoides mccartyi (strain ATCC BAA-2100 / JCM 16839 / KCTC 5957 / BAV1).